Here is a 727-residue protein sequence, read N- to C-terminus: Phosphoribosylformylglycinamidine synthase subunit PurL (727 aa).

Histidine 47 is a catalytic residue. The ATP site is built by tyrosine 50 and lysine 89. Glutamate 91 is a binding site for Mg(2+). Residues 92–95 and arginine 114 each bind substrate; that span reads SHNH. Residue histidine 93 is the Proton acceptor of the active site. Position 115 (aspartate 115) interacts with Mg(2+). Glutamine 238 contacts substrate. Aspartate 266 lines the Mg(2+) pocket. 310–312 is a binding site for substrate; it reads ESQ. ATP is bound by residues aspartate 490 and glycine 527. A Mg(2+)-binding site is contributed by asparagine 528. Serine 530 is a binding site for substrate.

It belongs to the FGAMS family. As to quaternary structure, monomer. Part of the FGAM synthase complex composed of 1 PurL, 1 PurQ and 2 PurS subunits.

Its subcellular location is the cytoplasm. The enzyme catalyses N(2)-formyl-N(1)-(5-phospho-beta-D-ribosyl)glycinamide + L-glutamine + ATP + H2O = 2-formamido-N(1)-(5-O-phospho-beta-D-ribosyl)acetamidine + L-glutamate + ADP + phosphate + H(+). Its pathway is purine metabolism; IMP biosynthesis via de novo pathway; 5-amino-1-(5-phospho-D-ribosyl)imidazole from N(2)-formyl-N(1)-(5-phospho-D-ribosyl)glycinamide: step 1/2. Functionally, part of the phosphoribosylformylglycinamidine synthase complex involved in the purines biosynthetic pathway. Catalyzes the ATP-dependent conversion of formylglycinamide ribonucleotide (FGAR) and glutamine to yield formylglycinamidine ribonucleotide (FGAM) and glutamate. The FGAM synthase complex is composed of three subunits. PurQ produces an ammonia molecule by converting glutamine to glutamate. PurL transfers the ammonia molecule to FGAR to form FGAM in an ATP-dependent manner. PurS interacts with PurQ and PurL and is thought to assist in the transfer of the ammonia molecule from PurQ to PurL. This Acidiphilium cryptum (strain JF-5) protein is Phosphoribosylformylglycinamidine synthase subunit PurL.